The primary structure comprises 116 residues: Class I hydrophobin 1 (116 aa).

The signal sequence occupies residues 1–19 (MLFKQAILVATTLTTLAVA). 4 disulfide bridges follow: Cys-35/Cys-95, Cys-42/Cys-89, Cys-43/Cys-76, and Cys-96/Cys-109. N-linked (GlcNAc...) asparagine glycosylation is found at Asn-44 and Asn-100.

The protein belongs to the fungal hydrophobin family. Self-assembles to form functional amyloid fibrils called rodlets. Self-assembly into fibrillar rodlets occurs spontaneously at hydrophobic:hydrophilic interfaces and the rodlets further associate laterally to form amphipathic monolayers.

It is found in the secreted. It localises to the cell wall. Functionally, aerial growth, conidiation, and dispersal of filamentous fungi in the environment rely upon a capability of their secreting small amphipathic proteins called hydrophobins (HPBs) with low sequence identity. Class I can self-assemble into an outermost layer of rodlet bundles on aerial cell surfaces, conferring cellular hydrophobicity that supports fungal growth, development and dispersal; whereas Class II form highly ordered films at water-air interfaces through intermolecular interactions but contribute nothing to the rodlet structure. The chain is Class I hydrophobin 1 from Pleurotus ostreatus (strain PC15) (Oyster mushroom).